Consider the following 76-residue polypeptide: Adipogenesis regulatory factor (76 aa).

In terms of tissue distribution, expressed in adipose tissue (at protein level). Highly expressed in omental and subcutaneous adipose tissues. Expressed in heart, cornea, liver, kidney and spleen.

Its subcellular location is the nucleus. Functionally, plays a role in fat cell development; promotes adipogenic differentiation and stimulates transcription initiation of master adipogenesis factors like PPARG and CEBPA at early stages of preadipocyte differentiation. Its overexpression confers resistance to the anticancer chemotherapeutic drug cisplatin. The protein is Adipogenesis regulatory factor (ADIRF) of Homo sapiens (Human).